Reading from the N-terminus, the 604-residue chain is NADP-dependent malic enzyme, mitochondrial (604 aa).

The tract at residues Ser28 to Gly50 is disordered. Catalysis depends on Tyr137, which acts as the Proton donor. Position 190 (Arg190) interacts with NADP(+). Lys208 (proton acceptor) is an active-site residue. Positions 280, 281, and 304 each coordinate a divalent metal cation. Residue Asp304 coordinates NADP(+). Ser371 is subject to Phosphoserine. Asn443 serves as a coordination point for NADP(+).

Belongs to the malic enzymes family. Mg(2+) is required as a cofactor. It depends on Mn(2+) as a cofactor.

The protein localises to the mitochondrion matrix. It carries out the reaction (S)-malate + NADP(+) = pyruvate + CO2 + NADPH. The catalysed reaction is oxaloacetate + H(+) = pyruvate + CO2. This is NADP-dependent malic enzyme, mitochondrial (Me3) from Mus musculus (Mouse).